Consider the following 94-residue polypeptide: MSIKPLGDRVVIKRLEAEETTKSGIIVTGTAKERPQEAEVVAVGPGAIVDGKRTEMEVKIGDKVLYSKYAGTEVKFEGEEYTILRQDDILAIVE.

It belongs to the GroES chaperonin family. Heptamer of 7 subunits arranged in a ring. Interacts with the chaperonin GroEL.

It localises to the cytoplasm. Its function is as follows. Together with the chaperonin GroEL, plays an essential role in assisting protein folding. The GroEL-GroES system forms a nano-cage that allows encapsulation of the non-native substrate proteins and provides a physical environment optimized to promote and accelerate protein folding. GroES binds to the apical surface of the GroEL ring, thereby capping the opening of the GroEL channel. This is Co-chaperonin GroES from Clostridium perfringens (strain ATCC 13124 / DSM 756 / JCM 1290 / NCIMB 6125 / NCTC 8237 / Type A).